A 303-amino-acid polypeptide reads, in one-letter code: Diaminopimelate epimerase (303 aa).

Substrate is bound by residues asparagine 15, glutamine 47, and asparagine 67. The Proton donor role is filled by cysteine 76. Substrate is bound by residues 77–78, asparagine 163, asparagine 197, and 215–216; these read GN and ER. The active-site Proton acceptor is the cysteine 224. Position 225–226 (225–226) interacts with substrate; it reads GS.

It belongs to the diaminopimelate epimerase family. In terms of assembly, homodimer.

It localises to the cytoplasm. It catalyses the reaction (2S,6S)-2,6-diaminopimelate = meso-2,6-diaminopimelate. The protein operates within amino-acid biosynthesis; L-lysine biosynthesis via DAP pathway; DL-2,6-diaminopimelate from LL-2,6-diaminopimelate: step 1/1. Its function is as follows. Catalyzes the stereoinversion of LL-2,6-diaminopimelate (L,L-DAP) to meso-diaminopimelate (meso-DAP), a precursor of L-lysine and an essential component of the bacterial peptidoglycan. This chain is Diaminopimelate epimerase, found in Allorhizobium ampelinum (strain ATCC BAA-846 / DSM 112012 / S4) (Agrobacterium vitis (strain S4)).